A 106-amino-acid polypeptide reads, in one-letter code: Putative double-stranded DNA mimic protein VV1_3059 (106 aa).

It belongs to the putative dsDNA mimic protein family.

Its function is as follows. May act as a double-stranded DNA (dsDNA) mimic. Probably regulates the activity of a dsDNA-binding protein. The sequence is that of Putative double-stranded DNA mimic protein VV1_3059 from Vibrio vulnificus (strain CMCP6).